The chain runs to 237 residues: Probable transcriptional regulatory protein MCAP_0598 (237 aa).

This sequence belongs to the TACO1 family.

The protein resides in the cytoplasm. The polypeptide is Probable transcriptional regulatory protein MCAP_0598 (Mycoplasma capricolum subsp. capricolum (strain California kid / ATCC 27343 / NCTC 10154)).